A 244-amino-acid chain; its full sequence is uncharacterized protein (244 aa).

Positions 1–127 (MSGPQGSDPR…YPGQYGPYGQ (127 aa)) are disordered. The span at 34-43 (WQQQPTQEAT) shows a compositional bias: polar residues. 2 stretches are compositionally biased toward low complexity: residues 45–75 (QAPA…YAQP) and 88–127 (PGQY…PYGQ). Residues 136 to 156 (VAVIGGVIAVMAVLFIGAVLI) traverse the membrane as a helical segment.

The protein localises to the membrane. This is an uncharacterized protein from Mycobacterium tuberculosis (strain CDC 1551 / Oshkosh).